The chain runs to 361 residues: Phospho-N-acetylmuramoyl-pentapeptide-transferase (361 aa).

Transmembrane regions (helical) follow at residues leucine 28–leucine 48, threonine 74–leucine 94, isoleucine 99–alanine 119, serine 133–aspartate 153, leucine 168–serine 188, valine 203–isoleucine 223, threonine 236–phenylalanine 256, valine 263–isoleucine 283, valine 288–valine 308, and lysine 338–leucine 358.

It belongs to the glycosyltransferase 4 family. MraY subfamily. Mg(2+) serves as cofactor.

Its subcellular location is the cell inner membrane. The enzyme catalyses UDP-N-acetyl-alpha-D-muramoyl-L-alanyl-gamma-D-glutamyl-meso-2,6-diaminopimeloyl-D-alanyl-D-alanine + di-trans,octa-cis-undecaprenyl phosphate = di-trans,octa-cis-undecaprenyl diphospho-N-acetyl-alpha-D-muramoyl-L-alanyl-D-glutamyl-meso-2,6-diaminopimeloyl-D-alanyl-D-alanine + UMP. It participates in cell wall biogenesis; peptidoglycan biosynthesis. In terms of biological role, catalyzes the initial step of the lipid cycle reactions in the biosynthesis of the cell wall peptidoglycan: transfers peptidoglycan precursor phospho-MurNAc-pentapeptide from UDP-MurNAc-pentapeptide onto the lipid carrier undecaprenyl phosphate, yielding undecaprenyl-pyrophosphoryl-MurNAc-pentapeptide, known as lipid I. In Rickettsia canadensis (strain McKiel), this protein is Phospho-N-acetylmuramoyl-pentapeptide-transferase.